The primary structure comprises 511 residues: ATP synthase subunit alpha 1 (511 aa).

174 to 181 (GDRQTGKT) lines the ATP pocket.

The protein belongs to the ATPase alpha/beta chains family. F-type ATPases have 2 components, CF(1) - the catalytic core - and CF(0) - the membrane proton channel. CF(1) has five subunits: alpha(3), beta(3), gamma(1), delta(1), epsilon(1). CF(0) has four main subunits: a(1), b(1), b'(1) and c(9-12).

The protein localises to the cell inner membrane. The enzyme catalyses ATP + H2O + 4 H(+)(in) = ADP + phosphate + 5 H(+)(out). In terms of biological role, produces ATP from ADP in the presence of a proton gradient across the membrane. The alpha chain is a regulatory subunit. In Chlorobium luteolum (strain DSM 273 / BCRC 81028 / 2530) (Pelodictyon luteolum), this protein is ATP synthase subunit alpha 1.